A 276-amino-acid chain; its full sequence is NH(3)-dependent NAD(+) synthetase (276 aa).

Gly-43–Ser-50 lines the ATP pocket. Asp-49 serves as a coordination point for Mg(2+). Residue Arg-146 participates in deamido-NAD(+) binding. Thr-166 serves as a coordination point for ATP. Glu-171 serves as a coordination point for Mg(2+). Lys-179 and Asp-186 together coordinate deamido-NAD(+). 2 residues coordinate ATP: Lys-195 and Thr-217. His-266–Lys-267 serves as a coordination point for deamido-NAD(+).

Belongs to the NAD synthetase family. In terms of assembly, homodimer.

The enzyme catalyses deamido-NAD(+) + NH4(+) + ATP = AMP + diphosphate + NAD(+) + H(+). It functions in the pathway cofactor biosynthesis; NAD(+) biosynthesis; NAD(+) from deamido-NAD(+) (ammonia route): step 1/1. Catalyzes the ATP-dependent amidation of deamido-NAD to form NAD. Uses ammonia as a nitrogen source. This chain is NH(3)-dependent NAD(+) synthetase, found in Shewanella oneidensis (strain ATCC 700550 / JCM 31522 / CIP 106686 / LMG 19005 / NCIMB 14063 / MR-1).